Here is an 801-residue protein sequence, read N- to C-terminus: Ribosome biogenesis protein ERB1 (801 aa).

Disordered regions lie at residues 1 to 135 (MGSK…LEDR) and 358 to 377 (PEYL…DPED). Residues 35 to 90 (SEDEEDYIPSSEVDEDDDDDADESASEDSDDSNDSEDDEVEEDDEALLSDEIPSEG) show a composition bias toward acidic residues. Composition is skewed to basic and acidic residues over residues 91 to 113 (ESEK…KEPS), 124 to 135 (PPRKEDEELEDR), and 362 to 377 (PTKE…DPED). 2 WD repeats span residues 451-490 (GHEG…QVWS) and 494-534 (NGDE…VTPA). The disordered stretch occupies residues 546–570 (GFGHATNGKQQANLPPGKEPPGKWA). 5 WD repeats span residues 586–628 (TVRS…TQIP), 631–669 (KLNG…LVKI), 672–711 (PGAK…RPYK), 715–755 (FHTE…DQLE), and 771–801 (VNKL…RLWM).

Belongs to the WD repeat BOP1/ERB1 family. As to quaternary structure, component of the NOP7 complex, composed of ERB1, NOP7 and YTM1. The complex is held together by ERB1, which interacts with NOP7 via its N-terminal domain and with YTM1 via a high-affinity interaction between the seven-bladed beta-propeller domains of the 2 proteins. The NOP7 complex associates with the 66S pre-ribosome.

Its subcellular location is the nucleus. The protein localises to the nucleolus. It localises to the nucleoplasm. Component of the NOP7 complex, which is required for maturation of the 25S and 5.8S ribosomal RNAs and formation of the 60S ribosome. The polypeptide is Ribosome biogenesis protein ERB1 (Chaetomium thermophilum (strain DSM 1495 / CBS 144.50 / IMI 039719) (Thermochaetoides thermophila)).